The following is a 217-amino-acid chain: 25 kDa ookinete surface antigen (217 aa).

The first 16 residues, 1 to 16, serve as a signal peptide directing secretion; the sequence is MNKLYSLFLFLFIQLS. The EGF-like 1; truncated domain maps to 30–59; the sequence is CKRGFLIQMSGHLECKCENDLVLVNEETCE. EGF-like domains are found at residues 61-106, 106-150, and 153-193; these read KVLK…NVCI, IPNE…NKCS, and GETK…SICT. Intrachain disulfides connect cysteine 65/cysteine 80, cysteine 74/cysteine 92, cysteine 94/cysteine 105, cysteine 110/cysteine 120, cysteine 115/cysteine 133, cysteine 135/cysteine 149, cysteine 157/cysteine 168, cysteine 161/cysteine 177, and cysteine 179/cysteine 192. Asparagine 112 carries an N-linked (GlcNAc...) asparagine glycan. Asparagine 165 and asparagine 187 each carry an N-linked (GlcNAc...) asparagine glycan. A lipid anchor (GPI-anchor amidated serine) is attached at serine 196. Positions 197-217 are cleaved as a propeptide — removed in mature form; it reads AYNILNLSIMFILFSVCFFIM. A glycan (N-linked (GlcNAc...) asparagine) is linked at asparagine 202.

The protein localises to the cell membrane. The sequence is that of 25 kDa ookinete surface antigen from Plasmodium falciparum (isolate NF54).